The following is a 271-amino-acid chain: Zinc finger protein 501 (271 aa).

C2H2-type zinc fingers lie at residues S22–H44, Y50–H72, Y78–H100, Y106–H128, Y134–H156, F162–H184, Y190–H212, Y218–H240, and Y246–H268.

This sequence belongs to the krueppel C2H2-type zinc-finger protein family.

The protein resides in the nucleus. It is found in the nucleolus. May be involved in transcriptional regulation. Essential for Golgi structural integrity. This is Zinc finger protein 501 (ZNF501) from Pongo abelii (Sumatran orangutan).